Reading from the N-terminus, the 391-residue chain is Large ribosomal subunit protein uL3 (391 aa).

Over residues 1–10 (MSHRKFEAPR) the composition is skewed to basic and acidic residues. The disordered stretch occupies residues 1-41 (MSHRKFEAPRHGSLGFRPRRRTRHHRGRCRSFPKDDPSKKP). Over residues 17 to 31 (RPRRRTRHHRGRCRS) the composition is skewed to basic residues.

It belongs to the universal ribosomal protein uL3 family.

The protein resides in the cytoplasm. In terms of biological role, the L3 protein is a component of the large subunit of cytoplasmic ribosomes. The sequence is that of Large ribosomal subunit protein uL3 (RPL3) from Tetrahymena thermophila.